Here is a 535-residue protein sequence, read N- to C-terminus: Beta-amylase (535 aa).

Residues 1-2 (ME) constitute a propeptide, removed in mature form. N-acetylvaline is present on Val-3. Substrate-binding residues include Asp-51, His-91, and Asp-99. Glu-184 serves as the catalytic Proton donor. Substrate contacts are provided by Lys-293, His-298, and Thr-340. Catalysis depends on Glu-378, which acts as the Proton acceptor. Residues 379–380 (NA) and Arg-418 contribute to the substrate site. A run of 3 repeats spans residues 489–499 (GPTGGMGGQAE), 500–510 (GPTCGMGGQVK), and 511–521 (GPTGGMGGQAE). Residues 489–532 (GPTGGMGGQAEGPTCGMGGQVKGPTGGMGGQAEDPTSGMGGELP) form a 4 X 11 AA tandem repeats region. Positions 490–535 (PTGGMGGQAEGPTCGMGGQVKGPTGGMGGQAEDPTSGMGGELPATM) are cleaved as a propeptide — removed in mature form. The tract at residues 513–535 (TGGMGGQAEDPTSGMGGELPATM) is disordered. The stretch at 522 to 532 (DPTSGMGGELP) is one 4; approximate repeat.

This sequence belongs to the glycosyl hydrolase 14 family. As to quaternary structure, monomer. As to expression, endosperm.

It carries out the reaction Hydrolysis of (1-&gt;4)-alpha-D-glucosidic linkages in polysaccharides so as to remove successive maltose units from the non-reducing ends of the chains.. Catalyzes the liberation of maltose from 1,4-alpha-D glucans. In Hordeum vulgare subsp. spontaneum (Wild barley), this protein is Beta-amylase.